A 188-amino-acid chain; its full sequence is MDKRTTLVALVSIIFFTSGCDDQKKGNGNAESTQITKNDITTQLKLDKTQQPDDIEKKIKEIQANSTPEKIKKFNELKDDDPKILRESVVSEIKKKLPLLVDEATLMTDVSTDGGTFSYKYVTKGISASTMESDVWKDAMQKNIKNSYCSDDARLKVFRELFPEGVIYNYYLSDKLIYTYKALPSICS.

The chain is Protein K (K) from Escherichia coli.